A 140-amino-acid chain; its full sequence is Small ribosomal subunit protein uS12m (140 aa).

Belongs to the universal ribosomal protein uS12 family.

It localises to the mitochondrion. In Dictyostelium citrinum (Slime mold), this protein is Small ribosomal subunit protein uS12m (mrps12).